The following is a 336-amino-acid chain: Ketol-acid reductoisomerase (NADP(+)) (336 aa).

The KARI N-terminal Rossmann domain maps to 1 to 181 (MNVYYDKDCN…GGGRTGIIET (181 aa)). NADP(+)-binding positions include 24–27 (YGSQ), Arg-47, Ser-50, Ser-52, and 82–85 (DEFQ). His-107 is a catalytic residue. Gly-133 contacts NADP(+). One can recognise a KARI C-terminal knotted domain in the interval 182–327 (TFQDETETDL…GKLRSMMPWI (146 aa)). Mg(2+) is bound by residues Asp-190, Glu-194, Glu-226, and Glu-230. Ser-251 contacts substrate.

This sequence belongs to the ketol-acid reductoisomerase family. The cofactor is Mg(2+).

The catalysed reaction is (2R)-2,3-dihydroxy-3-methylbutanoate + NADP(+) = (2S)-2-acetolactate + NADPH + H(+). It carries out the reaction (2R,3R)-2,3-dihydroxy-3-methylpentanoate + NADP(+) = (S)-2-ethyl-2-hydroxy-3-oxobutanoate + NADPH + H(+). It functions in the pathway amino-acid biosynthesis; L-isoleucine biosynthesis; L-isoleucine from 2-oxobutanoate: step 2/4. Its pathway is amino-acid biosynthesis; L-valine biosynthesis; L-valine from pyruvate: step 2/4. Its function is as follows. Involved in the biosynthesis of branched-chain amino acids (BCAA). Catalyzes an alkyl-migration followed by a ketol-acid reduction of (S)-2-acetolactate (S2AL) to yield (R)-2,3-dihydroxy-isovalerate. In the isomerase reaction, S2AL is rearranged via a Mg-dependent methyl migration to produce 3-hydroxy-3-methyl-2-ketobutyrate (HMKB). In the reductase reaction, this 2-ketoacid undergoes a metal-dependent reduction by NADPH to yield (R)-2,3-dihydroxy-isovalerate. The protein is Ketol-acid reductoisomerase (NADP(+)) of Geotalea daltonii (strain DSM 22248 / JCM 15807 / FRC-32) (Geobacter daltonii).